The primary structure comprises 255 residues: 5-oxoprolinase subunit A (255 aa).

Belongs to the LamB/PxpA family. As to quaternary structure, forms a complex composed of PxpA, PxpB and PxpC.

It carries out the reaction 5-oxo-L-proline + ATP + 2 H2O = L-glutamate + ADP + phosphate + H(+). Its function is as follows. Catalyzes the cleavage of 5-oxoproline to form L-glutamate coupled to the hydrolysis of ATP to ADP and inorganic phosphate. In Nitrobacter hamburgensis (strain DSM 10229 / NCIMB 13809 / X14), this protein is 5-oxoprolinase subunit A.